We begin with the raw amino-acid sequence, 406 residues long: uncharacterized protein (406 aa).

This is an uncharacterized protein from Connochaetes taurinus (Blue wildebeest).